Here is a 327-residue protein sequence, read N- to C-terminus: tRNA dimethylallyltransferase (327 aa).

18-25 (GPTASGKT) lines the ATP pocket. Residue 20-25 (TASGKT) participates in substrate binding. 3 interaction with substrate tRNA regions span residues 43 to 46 (DSAL), 167 to 171 (QRVQR), and 251 to 256 (RCVGYR).

It belongs to the IPP transferase family. Monomer. The cofactor is Mg(2+).

It catalyses the reaction adenosine(37) in tRNA + dimethylallyl diphosphate = N(6)-dimethylallyladenosine(37) in tRNA + diphosphate. In terms of biological role, catalyzes the transfer of a dimethylallyl group onto the adenine at position 37 in tRNAs that read codons beginning with uridine, leading to the formation of N6-(dimethylallyl)adenosine (i(6)A). The protein is tRNA dimethylallyltransferase of Methylibium petroleiphilum (strain ATCC BAA-1232 / LMG 22953 / PM1).